The chain runs to 213 residues: Probable aspartate aminotransferase (213 aa).

The L-aspartate site is built by glycine 47, tryptophan 133, and asparagine 183.

The protein belongs to the class-I pyridoxal-phosphate-dependent aminotransferase family. Homodimer. Pyridoxal 5'-phosphate serves as cofactor.

It localises to the cytoplasm. The enzyme catalyses L-aspartate + 2-oxoglutarate = oxaloacetate + L-glutamate. In Streptomyces griseus, this protein is Probable aspartate aminotransferase (aspC).